A 335-amino-acid polypeptide reads, in one-letter code: Acetyl-coenzyme A carboxylase carboxyl transferase subunit alpha (335 aa).

A CoA carboxyltransferase C-terminal domain is found at 40–294 (QLETLAARRR…KEAIEKHLNA (255 aa)).

This sequence belongs to the AccA family. Acetyl-CoA carboxylase is a heterohexamer composed of biotin carboxyl carrier protein (AccB), biotin carboxylase (AccC) and two subunits each of ACCase subunit alpha (AccA) and ACCase subunit beta (AccD).

The protein localises to the cytoplasm. The enzyme catalyses N(6)-carboxybiotinyl-L-lysyl-[protein] + acetyl-CoA = N(6)-biotinyl-L-lysyl-[protein] + malonyl-CoA. Its pathway is lipid metabolism; malonyl-CoA biosynthesis; malonyl-CoA from acetyl-CoA: step 1/1. In terms of biological role, component of the acetyl coenzyme A carboxylase (ACC) complex. First, biotin carboxylase catalyzes the carboxylation of biotin on its carrier protein (BCCP) and then the CO(2) group is transferred by the carboxyltransferase to acetyl-CoA to form malonyl-CoA. The protein is Acetyl-coenzyme A carboxylase carboxyl transferase subunit alpha of Prochlorococcus marinus (strain MIT 9301).